Consider the following 162-residue polypeptide: MSGLTHFDAAGHAHMVDVGGKQETQRIAIARGTIRMLPATFALIRDGKAKKGDVLGVARIAAIQGAKRTAELIPLCHPLALTRVAVDFELDDALPGVHCVAQVETFGRTGVEMEALTAVQVGLLTVYDMCKAVDRGMVITEVSVREKRGGKSGDWKAEDTAG.

Substrate contacts are provided by residues 75 to 77 and 113 to 114; these read LCH and ME. D128 is an active-site residue.

The protein belongs to the MoaC family. Homohexamer; trimer of dimers.

It catalyses the reaction (8S)-3',8-cyclo-7,8-dihydroguanosine 5'-triphosphate = cyclic pyranopterin phosphate + diphosphate. The protein operates within cofactor biosynthesis; molybdopterin biosynthesis. In terms of biological role, catalyzes the conversion of (8S)-3',8-cyclo-7,8-dihydroguanosine 5'-triphosphate to cyclic pyranopterin monophosphate (cPMP). This is Cyclic pyranopterin monophosphate synthase from Burkholderia ambifaria (strain MC40-6).